We begin with the raw amino-acid sequence, 466 residues long: Cysteine--tRNA ligase (466 aa).

Cys-27 contacts Zn(2+). The 'HIGH' region signature appears at 29–39 (PTVYNYIHIGN). Zn(2+) is bound by residues Cys-207, His-232, and Glu-236. Positions 264 to 268 (KMSKS) match the 'KMSKS' region motif. Position 267 (Lys-267) interacts with ATP.

The protein belongs to the class-I aminoacyl-tRNA synthetase family. In terms of assembly, monomer. The cofactor is Zn(2+).

It is found in the cytoplasm. It catalyses the reaction tRNA(Cys) + L-cysteine + ATP = L-cysteinyl-tRNA(Cys) + AMP + diphosphate. The protein is Cysteine--tRNA ligase of Thermoanaerobacter pseudethanolicus (strain ATCC 33223 / 39E) (Clostridium thermohydrosulfuricum).